Here is a 389-residue protein sequence, read N- to C-terminus: Chaperone protein DnaJ (389 aa).

The J domain maps to Lys-5–Glu-79. The segment at Gly-151 to Asn-234 adopts a CR-type zinc-finger fold. Residues Cys-164, Cys-167, Cys-182, Cys-185, Cys-208, Cys-211, Cys-222, and Cys-225 each coordinate Zn(2+). CXXCXGXG motif repeat units follow at residues Cys-164–Gly-171, Cys-182–Gly-189, Cys-208–Gly-215, and Cys-222–Lys-229.

Belongs to the DnaJ family. Homodimer. Zn(2+) serves as cofactor.

The protein localises to the cytoplasm. Its function is as follows. Participates actively in the response to hyperosmotic and heat shock by preventing the aggregation of stress-denatured proteins and by disaggregating proteins, also in an autonomous, DnaK-independent fashion. Unfolded proteins bind initially to DnaJ; upon interaction with the DnaJ-bound protein, DnaK hydrolyzes its bound ATP, resulting in the formation of a stable complex. GrpE releases ADP from DnaK; ATP binding to DnaK triggers the release of the substrate protein, thus completing the reaction cycle. Several rounds of ATP-dependent interactions between DnaJ, DnaK and GrpE are required for fully efficient folding. Also involved, together with DnaK and GrpE, in the DNA replication of plasmids through activation of initiation proteins. The chain is Chaperone protein DnaJ from Mycoplasma genitalium (strain ATCC 33530 / DSM 19775 / NCTC 10195 / G37) (Mycoplasmoides genitalium).